The following is a 267-amino-acid chain: Diphthine--ammonia ligase (267 aa).

Tyrosine 97 is modified (phosphotyrosine).

It belongs to the Diphthine--ammonia ligase family.

The catalysed reaction is diphthine-[translation elongation factor 2] + NH4(+) + ATP = diphthamide-[translation elongation factor 2] + AMP + diphosphate + H(+). It functions in the pathway protein modification; peptidyl-diphthamide biosynthesis. In terms of biological role, amidase that catalyzes the last step of diphthamide biosynthesis using ammonium and ATP. Diphthamide biosynthesis consists in the conversion of an L-histidine residue in the translation elongation factor eEF-2 (EEF2) to diphthamide. This is Diphthine--ammonia ligase (DPH6) from Bos taurus (Bovine).